The sequence spans 170 residues: Small ribosomal subunit protein bS18c (170 aa).

2 disordered regions span residues 1 to 59 and 151 to 170; these read MYIS…IGPG and NLRN…SSDC. 7 repeats span residues 4-10, 11-17, 18-24, 25-31, 32-38, 39-45, and 46-52; these read SKQPFRK, SKQTFHK, FKQPFRK, and SKQPFRR. The interval 4-52 is 7 X 7 AA tandem repeats; it reads SKQPFRKSKQPFRKSKQTFHKSKQPFRKFKQPFRKSKQPFRKSKQPFRR. Basic residues predominate over residues 7–55; the sequence is PFRKSKQPFRKSKQTFHKSKQPFRKFKQPFRKSKQPFRKSKQPFRRRSR.

This sequence belongs to the bacterial ribosomal protein bS18 family. Part of the 30S ribosomal subunit.

It is found in the plastid. It localises to the chloroplast. The chain is Small ribosomal subunit protein bS18c (rps18) from Zea mays (Maize).